The sequence spans 492 residues: Citrate synthase, peroxisomal (492 aa).

Active-site residues include His307, His346, and Asp402. Positions 469–492 (PAKVRSQDSYSSATTKRYSKVTSH) are disordered. A compositionally biased stretch (polar residues) spans 475–484 (QDSYSSATTK).

The protein belongs to the citrate synthase family.

The protein localises to the peroxisome. The enzyme catalyses oxaloacetate + acetyl-CoA + H2O = citrate + CoA + H(+). Its pathway is carbohydrate metabolism; tricarboxylic acid cycle; isocitrate from oxaloacetate: step 1/2. Its function is as follows. Peroxisomal protein involved in the cellular biosynthesis of citrate, and required primarily for cell growth and modulation of multicellular development. This chain is Citrate synthase, peroxisomal (cshA), found in Dictyostelium discoideum (Social amoeba).